Consider the following 273-residue polypeptide: MITETAYAKINLALHVRSKREDGYHEIETLFAFVDAGDVLVARAAEADRLETVGEFADVLDNPFDNLVARTMSTLPREGGLHVTLEKNLPVAAGLGGGSADAGAMFRIIEQMHGLPDDWEEKAIRLGADVPACVASEMAIGRGTGTDLEPVENDMAGMAVLLVNLRVPLPTGPVFKAWADTAGGEDLGPLPTGTAREIARKGRNDLRPPAVAICPPIADVLQALEATDPWMCEMSGSGATCFALYDETEMRDKAARAIAEHHPGWWQMTGTLQ.

Residue Lys-9 is part of the active site. Residue 90-100 (PVAAGLGGGSA) coordinates ATP. The active site involves Asp-129.

Belongs to the GHMP kinase family. IspE subfamily.

The enzyme catalyses 4-CDP-2-C-methyl-D-erythritol + ATP = 4-CDP-2-C-methyl-D-erythritol 2-phosphate + ADP + H(+). It participates in isoprenoid biosynthesis; isopentenyl diphosphate biosynthesis via DXP pathway; isopentenyl diphosphate from 1-deoxy-D-xylulose 5-phosphate: step 3/6. In terms of biological role, catalyzes the phosphorylation of the position 2 hydroxy group of 4-diphosphocytidyl-2C-methyl-D-erythritol. This is 4-diphosphocytidyl-2-C-methyl-D-erythritol kinase from Erythrobacter litoralis (strain HTCC2594).